The primary structure comprises 483 residues: tRNA sulfurtransferase (483 aa).

Residues 62–166 enclose the THUMP domain; sequence PEICDALTRI…QDKLILVKAR (105 aa). Residues 184–185, K266, G288, and Q297 contribute to the ATP site; that span reads LI. An intrachain disulfide couples C345 to C457. The Rhodanese domain maps to 405–483; sequence LADTDVLLDI…GYTNVKVYRP (79 aa). C457 serves as the catalytic Cysteine persulfide intermediate.

This sequence belongs to the ThiI family.

It is found in the cytoplasm. It catalyses the reaction [ThiI sulfur-carrier protein]-S-sulfanyl-L-cysteine + a uridine in tRNA + 2 reduced [2Fe-2S]-[ferredoxin] + ATP + H(+) = [ThiI sulfur-carrier protein]-L-cysteine + a 4-thiouridine in tRNA + 2 oxidized [2Fe-2S]-[ferredoxin] + AMP + diphosphate. The enzyme catalyses [ThiS sulfur-carrier protein]-C-terminal Gly-Gly-AMP + S-sulfanyl-L-cysteinyl-[cysteine desulfurase] + AH2 = [ThiS sulfur-carrier protein]-C-terminal-Gly-aminoethanethioate + L-cysteinyl-[cysteine desulfurase] + A + AMP + 2 H(+). Its pathway is cofactor biosynthesis; thiamine diphosphate biosynthesis. Its function is as follows. Catalyzes the ATP-dependent transfer of a sulfur to tRNA to produce 4-thiouridine in position 8 of tRNAs, which functions as a near-UV photosensor. Also catalyzes the transfer of sulfur to the sulfur carrier protein ThiS, forming ThiS-thiocarboxylate. This is a step in the synthesis of thiazole, in the thiamine biosynthesis pathway. The sulfur is donated as persulfide by IscS. The chain is tRNA sulfurtransferase from Yersinia pseudotuberculosis serotype O:1b (strain IP 31758).